Reading from the N-terminus, the 268-residue chain is MSWLKEVIGTEKAVIAMCHLRALPGDPSFDAQLGMNWVIDKAWDDLMALQNGGVDAVMFSNEFSLPYLTKVRPETTAAMARIIGQLMSDIRIPFGVNVLWDPVASFDLAMATGAKFIREIFTGAYASDFGVWDTNVGETIRHQHRIGAGEVKTLFNIVPEAAVYLGNRDICSIAKSTVFNNHPDALCVSGLTAGTRTDSALLKRVKETVPDTVVLANTGVCLENVEEQLSIADGCVTATTFKKDGVFANFVDQARVSQFMEKVHHIRR.

The protein belongs to the BtpA family.

This is Putative sgc region protein SgcQ (sgcQ) from Escherichia coli (strain K12).